The chain runs to 852 residues: Leucine--tRNA ligase (852 aa).

Residues 41-51 (PYPSGRIHIGH) carry the 'HIGH' region motif. Positions 623–627 (KMSKS) match the 'KMSKS' region motif. Residue lysine 626 participates in ATP binding.

This sequence belongs to the class-I aminoacyl-tRNA synthetase family.

It is found in the cytoplasm. It carries out the reaction tRNA(Leu) + L-leucine + ATP = L-leucyl-tRNA(Leu) + AMP + diphosphate. The sequence is that of Leucine--tRNA ligase from Ruegeria pomeroyi (strain ATCC 700808 / DSM 15171 / DSS-3) (Silicibacter pomeroyi).